A 210-amino-acid polypeptide reads, in one-letter code: Outer-membrane lipoprotein LolB (210 aa).

The first 29 residues, 1–29 (MSLISNNEERSLRVRYCIAIALSALLISG), serve as a signal peptide directing secretion. Residue Cys30 is the site of N-palmitoyl cysteine attachment. Cys30 carries the S-diacylglycerol cysteine lipid modification.

It belongs to the LolB family. In terms of assembly, monomer.

Its subcellular location is the cell outer membrane. Plays a critical role in the incorporation of lipoproteins in the outer membrane after they are released by the LolA protein. This Coxiella burnetii (strain RSA 493 / Nine Mile phase I) protein is Outer-membrane lipoprotein LolB.